We begin with the raw amino-acid sequence, 471 residues long: ATP synthase subunit beta (471 aa).

156–163 (GGAGVGKT) serves as a coordination point for ATP.

It belongs to the ATPase alpha/beta chains family. F-type ATPases have 2 components, CF(1) - the catalytic core - and CF(0) - the membrane proton channel. CF(1) has five subunits: alpha(3), beta(3), gamma(1), delta(1), epsilon(1). CF(0) has three main subunits: a(1), b(2) and c(9-12). The alpha and beta chains form an alternating ring which encloses part of the gamma chain. CF(1) is attached to CF(0) by a central stalk formed by the gamma and epsilon chains, while a peripheral stalk is formed by the delta and b chains.

It is found in the cell membrane. It carries out the reaction ATP + H2O + 4 H(+)(in) = ADP + phosphate + 5 H(+)(out). Its function is as follows. Produces ATP from ADP in the presence of a proton gradient across the membrane. The catalytic sites are hosted primarily by the beta subunits. The protein is ATP synthase subunit beta of Lysinibacillus sphaericus (strain C3-41).